Here is a 174-residue protein sequence, read N- to C-terminus: Small t antigen (174 aa).

Met-1 is modified (N-acetylmethionine; by host). Residues 12 to 75 enclose the J domain; that stretch reads QLMDLLGLER…VKYAHQPDFG (64 aa). Residues 103-116 form a C4-type; atypical zinc finger; the sequence is CAKKMSANCICLLC. The H1C3-type; atypical zinc finger occupies 122–143; sequence HENRKLYRKDPLVWVDCYCFDC.

As to quaternary structure, interacts with host PPP2R1A; the interaction inhibits PP2A activity.

It localises to the host cytoplasm. Its subcellular location is the host nucleus. In terms of biological role, promotes efficient viral genome replication by accelerating both G1 and S phase progression of the cell cycle. Inhibits host PP2A by binding to the A subunit, thereby displacing lower affinity regulatory B subunit. Inactivation of PP2A in turn results in the transactivation of cyclin A and cyclin D1 promoters. Late during the infection cycle, ST may induce dephosphorylation of host eIF4E-binding protein EIF4EBP1 leading to the inhibition of cap-dependent translation. May establish and maintain high levels of viral genomes during persistent infection in cell culture. This Simian virus 40 (SV40) protein is Small t antigen.